A 283-amino-acid polypeptide reads, in one-letter code: Putative S-adenosyl-L-methionine-dependent methyltransferase SAV_474/SAV474 (283 aa).

S-adenosyl-L-methionine-binding positions include Asp121 and 150–151 (DL). Residues 258–283 (AAYGRPISTPPQREERPGGLISAVRR) form a disordered region.

The protein belongs to the UPF0677 family.

In terms of biological role, exhibits S-adenosyl-L-methionine-dependent methyltransferase activity. This is Putative S-adenosyl-L-methionine-dependent methyltransferase SAV_474/SAV474 from Streptomyces avermitilis (strain ATCC 31267 / DSM 46492 / JCM 5070 / NBRC 14893 / NCIMB 12804 / NRRL 8165 / MA-4680).